The chain runs to 122 residues: Large ribosomal subunit protein uL18 (122 aa).

The disordered stretch occupies residues 1–25 (MSQISRKQQTQKRHRRLRRHITGTS). Residues 9–21 (QTQKRHRRLRRHI) are compositionally biased toward basic residues.

It belongs to the universal ribosomal protein uL18 family. Part of the 50S ribosomal subunit; part of the 5S rRNA/L5/L18/L25 subcomplex. Contacts the 5S and 23S rRNAs.

Its function is as follows. This is one of the proteins that bind and probably mediate the attachment of the 5S RNA into the large ribosomal subunit, where it forms part of the central protuberance. The chain is Large ribosomal subunit protein uL18 from Synechococcus sp. (strain CC9605).